The sequence spans 499 residues: Serine/threonine protein phosphatase 2A 57 kDa regulatory subunit B' beta isoform (499 aa).

Over residues 1–13 (MFKKIMKGGHRKP) the composition is skewed to basic residues. The tract at residues 1–65 (MFKKIMKGGH…PVTATPPPPP (65 aa)) is disordered.

Belongs to the phosphatase 2A regulatory subunit B56 family. In terms of assembly, PP2A consists of a common heteromeric enzyme, composed of a catalytic subunit (subunits C), a constant regulatory subunit (subunit A), and a variety of regulatory subunits such as subunits B (the R2/B/PR55/B55, R3/B''/PR72/PR130/PR59 and R5/B'/B56 families). Interacts with BZR1. Interacts with BRI1. Interacts with SRK2E/OST1. Expressed ubiquitously, higher levels in cotyledons and flowers.

The protein resides in the nucleus. It is found in the cytoplasm. Its function is as follows. The B regulatory subunit may modulate substrate selectivity and catalytic activity, and may also direct the localization of the catalytic enzyme to a particular subcellular compartment. Required for the formation of the PP2A holoenzyme that positively regulates brassinosteroid signaling by dephosphorylating and activating BZR1. The chain is Serine/threonine protein phosphatase 2A 57 kDa regulatory subunit B' beta isoform (B'BETA) from Arabidopsis thaliana (Mouse-ear cress).